The chain runs to 119 residues: DNA-binding protein inhibitor ID-3 (119 aa).

Residues 28-80 (RGKSPSAEEPLSLLDDMNHCYSRLRELVPGVPRGTQLSQVEILQRVIDYILDL) enclose the bHLH domain.

As to quaternary structure, homodimer, and heterodimer with other HLH proteins. Interacts with COPS5 and COPS7A. Interacts with IFI204. Interacts with GATA4 and NKX2-5. Interacts with ANKRD2; both proteins cooperate in myoblast differentiation. Interacts with CLOCK and BMAL1. Post-translationally, phosphorylated in vitro by CDC2 and PKC.

It localises to the nucleus. In terms of biological role, transcriptional regulator (lacking a basic DNA binding domain) which negatively regulates the basic helix-loop-helix (bHLH) transcription factors by forming heterodimers and inhibiting their DNA binding and transcriptional activity. Implicated in regulating a variety of cellular processes, including cellular growth, senescence, differentiation, apoptosis, angiogenesis, and neoplastic transformation. Involved in myogenesis by inhibiting skeletal muscle and cardiac myocyte differentiation and promoting muscle precursor cells proliferation. Inhibits the binding of E2A-containing protein complexes to muscle creatine kinase E-box enhancer. Regulates the circadian clock by repressing the transcriptional activator activity of the CLOCK-BMAL1 heterodimer. The chain is DNA-binding protein inhibitor ID-3 (Id3) from Rattus norvegicus (Rat).